The sequence spans 342 residues: Aristolochene synthase (342 aa).

Residues D115, N244, S248, and E252 each coordinate Mg(2+). Residues R340 and Y341 each coordinate (2E,6E)-farnesyl diphosphate.

The protein belongs to the terpene synthase family. In terms of assembly, homodimer. Requires Mg(2+) as cofactor.

It catalyses the reaction (2E,6E)-farnesyl diphosphate = (+)-aristolochene + diphosphate. It functions in the pathway sesquiterpene biosynthesis; aristolochene biosynthesis; aristolochene from farnesyl diphosphate: step 1/1. In terms of biological role, aristolochene synthase; part of the gene cluster that mediates the biosynthesis of PR-toxin, a bicyclic sesquiterpene belonging to the eremophilane class and acting as a mycotoxin. The first step of the pathway is catalyzed by the aristolochene synthase which performs the cyclization of trans,trans-farnesyl diphosphate (FPP) to the bicyclic sesquiterpene aristolochene. Following the formation of aristolochene, the non-oxygenated aristolochene is converted to the trioxygenated intermediate eremofortin B, via 7-epi-neopetasone. This conversion appears to involve three enzymes, a hydroxysterol oxidase-like enzyme, the quinone-oxidase prx3 that forms the quinone-type-structure in the bicyclic nucleus of aristolochene with the C8-oxo group and the C-3 hydroxyl group, and the P450 monooxygenase ORF6 that introduces the epoxide at the double bond between carbons 1 and 2. No monoxy or dioxy-intermediates have been reported to be released to the broth, so these three early oxidative reactions may be coupled together. Eremofortin B is further oxidized by another P450 monooxygenase, that introduces a second epoxide between carbons 7 and 11 prior to acetylation to eremofortin A by the acetyltransferase ORF8. The second epoxidation may be performed by a second P450 monooxygenase. After the acetylation step, eremofortin A is converted to eremofortin C and then to PR-toxin. First the conversion of eremofortin A to eremofortin C proceeds by oxidation of the side chain of the molecule at C-12 and is catalyzed by the short-chain oxidoreductase prx1. The cytochrome P450 monooxygenase ORF5 also plays a role in this step. The primary alcohol formed at C-12 is finally oxidized by the short-chain alcohol dehydrogenase prx4 that forms PR-toxin. The polypeptide is Aristolochene synthase (Penicillium roqueforti (strain FM164)).